Here is a 436-residue protein sequence, read N- to C-terminus: CaM kinase-like vesicle-associated protein (436 aa).

Residues 24 to 286 form the Protein kinase domain; that stretch reads YDLGQIVKSE…AQEAINHEWI (263 aa). The segment at 328–436 is disordered; the sequence is APENQTAAAT…ALDTVEEQSG (109 aa). Over residues 333-409 the composition is skewed to low complexity; the sequence is TAAATAPAAE…QPPAEPVVHV (77 aa).

The protein belongs to the protein kinase superfamily. CAMK Ser/Thr protein kinase family. Interacts with calmodulin, in the presence of calcium. Requires Ca(2+) as cofactor.

It is found in the cytoplasmic vesicle membrane. Does not appear to have detectable kinase activity. The chain is CaM kinase-like vesicle-associated protein (camkv) from Danio rerio (Zebrafish).